Here is an 84-residue protein sequence, read N- to C-terminus: Small ribosomal subunit protein uS17 (84 aa).

The protein belongs to the universal ribosomal protein uS17 family. Part of the 30S ribosomal subunit.

Functionally, one of the primary rRNA binding proteins, it binds specifically to the 5'-end of 16S ribosomal RNA. The polypeptide is Small ribosomal subunit protein uS17 (Vibrio parahaemolyticus serotype O3:K6 (strain RIMD 2210633)).